The primary structure comprises 261 residues: Malonyl-[acyl-carrier protein] O-methyltransferase (261 aa).

It belongs to the methyltransferase superfamily.

The catalysed reaction is malonyl-[ACP] + S-adenosyl-L-methionine = malonyl-[ACP] methyl ester + S-adenosyl-L-homocysteine. The protein operates within cofactor biosynthesis; biotin biosynthesis. In terms of biological role, converts the free carboxyl group of a malonyl-thioester to its methyl ester by transfer of a methyl group from S-adenosyl-L-methionine (SAM). It allows to synthesize pimeloyl-ACP via the fatty acid synthetic pathway. The protein is Malonyl-[acyl-carrier protein] O-methyltransferase of Bacteroides thetaiotaomicron (strain ATCC 29148 / DSM 2079 / JCM 5827 / CCUG 10774 / NCTC 10582 / VPI-5482 / E50).